A 374-amino-acid polypeptide reads, in one-letter code: F-box/kelch-repeat protein At2g24250 (374 aa).

In terms of domain architecture, F-box spans 14 to 63 (PDWSQLPEELLHIISTHLEDHYFDAVHARSVCRSWRSTFPFPSSLLRQSY). Kelch repeat units lie at residues 100–150 (SEYF…PLGH) and 249–301 (NFLV…LGNF).

The protein is F-box/kelch-repeat protein At2g24250 of Arabidopsis thaliana (Mouse-ear cress).